The primary structure comprises 418 residues: AA14 family lytic polysaccharide monooxygenase B (418 aa).

A signal peptide spans 1 to 18 (MIPVFLAAVAAFLPLTSG). Asn31, Asn94, and Asn151 each carry an N-linked (GlcNAc...) asparagine glycan. 4 cysteine pairs are disulfide-bonded: Cys85-Cys108, Cys127-Cys154, Cys171-Cys176, and Cys178-Cys200. N-linked (GlcNAc...) asparagine glycosylation is found at Asn201 and Asn235. Cysteines 220 and 236 form a disulfide. A compositionally biased stretch (low complexity) spans 307 to 343 (AAATPAPSSSGSSPSSSSPGSSSTASTTSTSGPRPSA). The segment at 307–364 (AAATPAPSSSGSSPSSSSPGSSSTASTTSTSGPRPSARGFRRSTGERPPTGVPTPRKS) is disordered.

This sequence belongs to the polysaccharide monooxygenase AA14 family. It depends on Cu(2+) as a cofactor.

It localises to the secreted. In terms of biological role, lytic polysaccharide monooxygenase (LPMO) that oxidatively cleaves xylan with both C1 and C4 regioselectivity and that specifically targets the protective shield made by heteroxylans that cover cellulose microfibrils in wood. Catalysis by LPMOs requires the reduction of the active-site copper from Cu(II) to Cu(I) by a reducing agent and H(2)O(2) or O(2) as a cosubstrate. Cleavage occurs only when xylans are bound to cellulose and not when they are in solution. Increases the efficiency of wood saccharification through oxidative cleavage of highly refractory xylan-coated cellulose fibers via synergistic relationship with xylan-active enzymes, xylobiohydrolases and cellobiohydrolases. The protein is AA14 family lytic polysaccharide monooxygenase B of Trametes coccinea (strain BRFM310) (Pycnoporus coccineus).